A 338-amino-acid polypeptide reads, in one-letter code: Biotin synthase (338 aa).

A Radical SAM core domain is found at glutamine 50–arginine 277. 3 residues coordinate [4Fe-4S] cluster: cysteine 65, cysteine 69, and cysteine 72. Residues cysteine 109, cysteine 140, cysteine 200, and arginine 272 each contribute to the [2Fe-2S] cluster site.

The protein belongs to the radical SAM superfamily. Biotin synthase family. In terms of assembly, homodimer. Requires [4Fe-4S] cluster as cofactor. The cofactor is [2Fe-2S] cluster.

The enzyme catalyses (4R,5S)-dethiobiotin + (sulfur carrier)-SH + 2 reduced [2Fe-2S]-[ferredoxin] + 2 S-adenosyl-L-methionine = (sulfur carrier)-H + biotin + 2 5'-deoxyadenosine + 2 L-methionine + 2 oxidized [2Fe-2S]-[ferredoxin]. Its pathway is cofactor biosynthesis; biotin biosynthesis; biotin from 7,8-diaminononanoate: step 2/2. Functionally, catalyzes the conversion of dethiobiotin (DTB) to biotin by the insertion of a sulfur atom into dethiobiotin via a radical-based mechanism. The polypeptide is Biotin synthase (Actinobacillus succinogenes (strain ATCC 55618 / DSM 22257 / CCUG 43843 / 130Z)).